Here is an 870-residue protein sequence, read N- to C-terminus: Valine--tRNA ligase (870 aa).

The span at 1–13 (MTSQTFTTSSATP) shows a compositional bias: polar residues. The tract at residues 1 to 21 (MTSQTFTTSSATPPTRGVVPD) is disordered. Residues 63–73 (PTVSGHLHPGH) carry the 'HIGH' region motif. The segment at 479–505 (YDHPLLPDESALPVDPASQPPSGYQES) is disordered. The 'KMSKS' region signature appears at 595–599 (KMSKS). An ATP-binding site is contributed by Lys-598.

It belongs to the class-I aminoacyl-tRNA synthetase family. ValS type 2 subfamily. Monomer.

It is found in the cytoplasm. The enzyme catalyses tRNA(Val) + L-valine + ATP = L-valyl-tRNA(Val) + AMP + diphosphate. Its function is as follows. Catalyzes the attachment of valine to tRNA(Val). As ValRS can inadvertently accommodate and process structurally similar amino acids such as threonine, to avoid such errors, it has a 'posttransfer' editing activity that hydrolyzes mischarged Thr-tRNA(Val) in a tRNA-dependent manner. The sequence is that of Valine--tRNA ligase from Cutibacterium acnes (strain DSM 16379 / KPA171202) (Propionibacterium acnes).